The chain runs to 461 residues: D-phenylhydantoinase (461 aa).

Positions 59, 61, and 151 each coordinate a divalent metal cation. Position 151 is an N6-carboxylysine (lysine 151). Tyrosine 156 is a binding site for substrate. A divalent metal cation contacts are provided by histidine 182 and histidine 239. Residue serine 286 coordinates substrate. Aspartate 313 is an a divalent metal cation binding site. Residue asparagine 335 participates in substrate binding.

It belongs to the metallo-dependent hydrolases superfamily. Hydantoinase/dihydropyrimidinase family. Homotetramer. It depends on a divalent metal cation as a cofactor. In terms of processing, carboxylation allows a single lysine to coordinate two divalent metal cations.

The enzyme catalyses D-5-phenylhydantoin + H2O = N-carbamoyl-D-phenylglycine + H(+). Catalyzes the stereospecific hydrolysis of the cyclic amide bond of D-hydantoin derivatives with an aromatic side chains at the 5'-position. Has no activity on dihydropyrimidines. The physiological function is unknown. The sequence is that of D-phenylhydantoinase from Shigella boydii serotype 4 (strain Sb227).